Reading from the N-terminus, the 715-residue chain is Poly(A) polymerase alpha-A (715 aa).

ATP is bound by residues 82–84 (FGP), threonine 91, 95–97 (DID), aspartate 149, lysine 210, tyrosine 219, and 228–229 (GV). Mg(2+)-binding residues include aspartate 95, aspartate 97, and aspartate 149. The short motif at 472–489 (RKQLHQLQPSHVSPKKKK) is the Nuclear localization signal 1 element. Disordered regions lie at residues 510-543 (DSDNSMSVPSPTNATRTSPLNSSGLSQGNSPAAP), 560-590 (QNNSTENLGGSLNESIPESATHPGFSSTPKP), and 607-693 (KPVS…DLSD). Polar residues-rich tracts occupy residues 515-539 (MSVPSPTNATRTSPLNSSGLSQGNS) and 560-588 (QNNSTENLGGSLNESIPESATHPGFSSTP). The Nuclear localization signal 2 signature appears at 624–639 (KRTSSPSNEDSPKKNK). Residues 655–673 (DQNKLETEELKEVHSEEKS) are compositionally biased toward basic and acidic residues. Polar residues predominate over residues 674–692 (SSPVPGSLPFSQQSSTDLS).

The protein belongs to the poly(A) polymerase family. In terms of assembly, monomer. Mg(2+) is required as a cofactor. It depends on Mn(2+) as a cofactor.

It localises to the nucleus. The enzyme catalyses RNA(n) + ATP = RNA(n)-3'-adenine ribonucleotide + diphosphate. In terms of biological role, polymerase that creates the 3'-poly(A) tail of mRNA's. May acquire specificity through interaction with a cleavage and polyadenylation factor (CPSF). The protein is Poly(A) polymerase alpha-A (papola-a) of Xenopus laevis (African clawed frog).